A 387-amino-acid polypeptide reads, in one-letter code: Histone deacetylase 2 (387 aa).

The segment at 73–382 (KVSIIYSSSY…IENLSRQGLI (310 aa)) is histone deacetylase. The active-site Proton donor/acceptor is His-201. Asp-238, His-240, and Asp-318 together coordinate Zn(2+).

The protein belongs to the histone deacetylase family. HD type 3 subfamily. It depends on Zn(2+) as a cofactor.

The protein resides in the nucleus. The enzyme catalyses N(6)-acetyl-L-lysyl-[histone] + H2O = L-lysyl-[histone] + acetate. Its function is as follows. Responsible for the deacetylation of lysine residues on the N-terminal part of the core histones (H2A, H2B, H3 and H4). Histone deacetylation gives a tag for epigenetic repression and plays an important role in transcriptional regulation, cell cycle progression and developmental events. Histone deacetylases act via the formation of large multiprotein complexes. This chain is Histone deacetylase 2 (HDA2), found in Arabidopsis thaliana (Mouse-ear cress).